A 99-amino-acid chain; its full sequence is MANVNIKPLEDKILVQINEAETTTASGLVIPDSAKEKPQEATVIAVGPGRFDEKGERIPLDIKEDDVVIFSRYGGTEIKFDGVEYLLLSARDILAIVEK.

This sequence belongs to the GroES chaperonin family. Heptamer of 7 subunits arranged in a ring. Interacts with the chaperonin GroEL.

It is found in the cytoplasm. In terms of biological role, together with the chaperonin GroEL, plays an essential role in assisting protein folding. The GroEL-GroES system forms a nano-cage that allows encapsulation of the non-native substrate proteins and provides a physical environment optimized to promote and accelerate protein folding. GroES binds to the apical surface of the GroEL ring, thereby capping the opening of the GroEL channel. This is Co-chaperonin GroES from Corynebacterium efficiens (strain DSM 44549 / YS-314 / AJ 12310 / JCM 11189 / NBRC 100395).